The following is a 410-amino-acid chain: MSFKELDPEVWSAIQQEGARQNRTIELIASENFASKGVRAAQGSVLTNKYAEGYPYKRYYGGTEYVDVVEQLAIDRLKALFGAEYANVQPHSGSQANAAAYMAFLQPGDKILGMDLDAGGHLTHGAKVSFSGKMYQSYTYGLDAESEQLDYEAIAKQAREVQPQMIVAGASAYSRIIDFNKFREIADEVGAYLMVDMAHIAGLVAAGLHPNPVGIADVVTSTTHKTLRGPRGGVILSQEKYAKKINSAIFPGSQGGPLEHVIAGKAIAFGEALQPEFKAYAAQIIKNAQAMAEVFTATEDIRVVAGGTDNHLFNLDLTKTGLNGKQTQELLDSVSITTNKEALPNETLSPFITSGIRIGTPAITTRGFNEADARHVAELIVTAIHHYDDAKVLKDVKKEAEILAMTHLFE.

(6S)-5,6,7,8-tetrahydrofolate contacts are provided by residues Leu116 and 120 to 122 (GHL). Lys225 is subject to N6-(pyridoxal phosphate)lysine. 349–351 (SPF) is a binding site for (6S)-5,6,7,8-tetrahydrofolate.

This sequence belongs to the SHMT family. Homodimer. Pyridoxal 5'-phosphate serves as cofactor.

Its subcellular location is the cytoplasm. It carries out the reaction (6R)-5,10-methylene-5,6,7,8-tetrahydrofolate + glycine + H2O = (6S)-5,6,7,8-tetrahydrofolate + L-serine. It functions in the pathway one-carbon metabolism; tetrahydrofolate interconversion. Its pathway is amino-acid biosynthesis; glycine biosynthesis; glycine from L-serine: step 1/1. Catalyzes the reversible interconversion of serine and glycine with tetrahydrofolate (THF) serving as the one-carbon carrier. This reaction serves as the major source of one-carbon groups required for the biosynthesis of purines, thymidylate, methionine, and other important biomolecules. Also exhibits THF-independent aldolase activity toward beta-hydroxyamino acids, producing glycine and aldehydes, via a retro-aldol mechanism. The chain is Serine hydroxymethyltransferase from Leuconostoc citreum (strain KM20).